Consider the following 345-residue polypeptide: Protein TRIGALACTOSYLDIACYLGLYCEROL 3, chloroplastic (345 aa).

Residues 1 to 46 (MLSLSCSSSSSSLLPPSLHYHGSSSVQSIVVPRRSLISFRRKVSCC) constitute a chloroplast transit peptide. Residues 85–336 (IECRDVYKSF…TNPIVQQFAT (252 aa)) enclose the ABC transporter domain. 117 to 124 (GPSGTGKS) contacts ATP.

It belongs to the ABC transporter superfamily. ABCI family. Catalytic subunit of the TGD complex, a lipid translocator at the inner chloroplast envelope membrane made of TGD1, TGD2 and TGD3. Interacts with TGD1 and TGD2 with an overall subunit stoichiometry of 2 TGD1, 2 TGD3 and 8 to 12 TGD2. Interacts with TGD5.

It localises to the plastid. The protein localises to the chloroplast stroma. ATPase transporter involved in lipid transfer from the endoplasmic reticulum (ER) to plastids, and necessary for thylakoids formation. Not involved in transition metal transport pathways. This Arabidopsis thaliana (Mouse-ear cress) protein is Protein TRIGALACTOSYLDIACYLGLYCEROL 3, chloroplastic.